Reading from the N-terminus, the 65-residue chain is Myotoxin-1 (65 aa).

A signal peptide spans 1–22 (MKILYLLFAFLFLAFLSEPGNA). 3 cysteine pairs are disulfide-bonded: Cys-26–Cys-58, Cys-33–Cys-52, and Cys-40–Cys-59.

It belongs to the crotamine-myotoxin family. As to quaternary structure, monomer. Expressed by the venom gland.

Its subcellular location is the secreted. Cationic peptide that possesses multiple functions. It acts as a cell-penetrating peptide (CPP), and as a potent voltage-gated potassium channel (Kv) inhibitor. It exhibits antimicrobial activities, hind limb paralysis, and severe muscle necrosis by a non-enzymatic mechanism. The protein is Myotoxin-1 of Crotalus durissus terrificus (South American rattlesnake).